Consider the following 294-residue polypeptide: Protoheme IX farnesyltransferase (294 aa).

The next 9 membrane-spanning stretches (helical) occupy residues 25–45 (SLVL…MGAV), 48–68 (LVTL…NCYW), 92–112 (AVAL…LALG), 115–135 (VLTA…YTPL), 141–161 (AAML…WTAV), 170–190 (FSLF…IALF), 216–236 (VVLY…LHIA), 240–260 (YLAA…WGFF), and 272–292 (FFFS…DRVP).

The protein belongs to the UbiA prenyltransferase family. Protoheme IX farnesyltransferase subfamily.

It is found in the cell inner membrane. It carries out the reaction heme b + (2E,6E)-farnesyl diphosphate + H2O = Fe(II)-heme o + diphosphate. It participates in porphyrin-containing compound metabolism; heme O biosynthesis; heme O from protoheme: step 1/1. In terms of biological role, converts heme B (protoheme IX) to heme O by substitution of the vinyl group on carbon 2 of heme B porphyrin ring with a hydroxyethyl farnesyl side group. The protein is Protoheme IX farnesyltransferase of Myxococcus xanthus (strain DK1622).